A 102-amino-acid polypeptide reads, in one-letter code: Class I hydrophobin 1 (102 aa).

The signal sequence occupies residues 1–18 (MSLFKILVAAATVATALA). Disulfide bonds link C37–C84, C45–C78, C46–C63, and C85–C97.

The protein belongs to the fungal hydrophobin family.

The protein resides in the secreted. It is found in the cell wall. In terms of biological role, aerial growth, conidiation, and dispersal of filamentous fungi in the environment rely upon a capability of their secreting small amphipathic proteins called hydrophobins (HPBs) with low sequence identity. Class I can self-assemble into an outermost layer of rodlet bundles on aerial cell surfaces, conferring cellular hydrophobicity that supports fungal growth, development and dispersal; whereas Class II form highly ordered films at water-air interfaces through intermolecular interactions but contribute nothing to the rodlet structure. Hyd1 is essential for stress tolerance, conidial hydrophobicity, adhesion to insect cuticle, and insect infectivity/pathogenicity. Plays a neglectable role in hyphal growth and asexual development. This chain is Class I hydrophobin 1, found in Metarhizium robertsii (strain ARSEF 23 / ATCC MYA-3075) (Metarhizium anisopliae (strain ARSEF 23)).